The following is a 395-amino-acid chain: Elongation factor Tu (395 aa).

The tr-type G domain maps to 10–205; it reads KPHVNVGTIG…VDNDIPIPPR (196 aa). Positions 19-26 are G1; the sequence is GHVDHGKT. Residue 19–26 coordinates GTP; that stretch reads GHVDHGKT. T26 contributes to the Mg(2+) binding site. Positions 60 to 64 are G2; it reads GITIN. The segment at 81–84 is G3; it reads DCPG. Residues 81–85 and 136–139 each bind GTP; these read DCPGH and NKVD. The segment at 136 to 139 is G4; the sequence is NKVD. The tract at residues 174–176 is G5; sequence SAL.

This sequence belongs to the TRAFAC class translation factor GTPase superfamily. Classic translation factor GTPase family. EF-Tu/EF-1A subfamily. Monomer.

It localises to the cytoplasm. The enzyme catalyses GTP + H2O = GDP + phosphate + H(+). Functionally, GTP hydrolase that promotes the GTP-dependent binding of aminoacyl-tRNA to the A-site of ribosomes during protein biosynthesis. This chain is Elongation factor Tu, found in Cytophaga hutchinsonii (strain ATCC 33406 / DSM 1761 / CIP 103989 / NBRC 15051 / NCIMB 9469 / D465).